We begin with the raw amino-acid sequence, 183 residues long: Non-specific lipid transfer protein GPI-anchored 15 (183 aa).

An N-terminal signal peptide occupies residues 1 to 24 (MGYRRSYAITFVALVAALWSVTKA). 4 cysteine pairs are disulfide-bonded: cysteine 30-cysteine 71, cysteine 40-cysteine 55, cysteine 56-cysteine 97, and cysteine 69-cysteine 107. N-linked (GlcNAc...) asparagine glycosylation is found at asparagine 47 and asparagine 86. The tract at residues 108 to 158 (NAATGPTAQPPAPSPTEKTPDVTLTPTSLPGARSGVGGGSKTVPSVGTGSS) is disordered. Residues 149 to 158 (TVPSVGTGSS) show a composition bias toward polar residues. Serine 158 carries GPI-anchor amidated serine lipidation. A propeptide spans 159 to 183 (SRNVDPLPLHFLMFAVLVVCTSSFL) (removed in mature form).

It belongs to the plant LTP family. Expressed in seedlings, preferentially in the endodermis of hypocotyls and roots. Also observed in siliques.

The protein resides in the cell membrane. Probable lipid transfer protein. The sequence is that of Non-specific lipid transfer protein GPI-anchored 15 from Arabidopsis thaliana (Mouse-ear cress).